The chain runs to 269 residues: Tryptophan synthase alpha chain (269 aa).

Active-site proton acceptor residues include Glu49 and Asp60.

The protein belongs to the TrpA family. As to quaternary structure, tetramer of two alpha and two beta chains.

It catalyses the reaction (1S,2R)-1-C-(indol-3-yl)glycerol 3-phosphate + L-serine = D-glyceraldehyde 3-phosphate + L-tryptophan + H2O. Its pathway is amino-acid biosynthesis; L-tryptophan biosynthesis; L-tryptophan from chorismate: step 5/5. The alpha subunit is responsible for the aldol cleavage of indoleglycerol phosphate to indole and glyceraldehyde 3-phosphate. The chain is Tryptophan synthase alpha chain from Pseudomonas syringae pv. syringae.